Consider the following 856-residue polypeptide: MPRKATTPMMEQYYQIKDQYPDAFLFYRVGDFYELYEDDAIKGSQILELTLTHRSNKSENPIPMAGVPHMAVDSYVNTLVEKGYKVAICEQLEDPKKAKGMVKRGIIQLVTPGTKMAQGPDDSQESNYLTSVVEKAGGYGLAYSDLSTGEIFVTHVKHYAEVVNELLSLRTREVVFAGNLSASDRDRLQKANITVSEPAELEGEHAEISYVQQKLTDSMEKAAVRQLVVYLLATQKRSLAHLQVAESFEIGQYLQMANTVQRNLELTQSATTGRKQGSLFWVLDKTTTAMGGRLLKQWLSRPLLSLDRIKQRQQMVQALLDDYFTRENIVDSLKGVYDLERLSGRVAFGNVNPRELLQLAKSLEATKLIIQTLVESGNPDLEKYGQGIDPQSELAESITNCLVDQPPISAKDGGIIRAGVSEDLDKYREAMNGGKKWLAQMEMEERQRTGIDNLKIGYNRVFGYFIQVSKGNVAKVPQDRYTRKQTLTNAERYITPELKEHENLILEAESRSTDLEYELFSQLREAVKAHIPDLQELGRQLAALDVFVAFAQDAEEKNYCRPSFSSKNEIAVKNGRHPVVEAVLPAGSYIPNDLVMDEDTSIYLITGPNMSGKSTYMRQLALIAIMAQIGSFVPADSAKLPVFDQIFTRIGAADDLYSGKSTFMVEMSEANEALQHASSRSLVLFDEIGRGTATYDGMALAGAIIKYLHDKVGAKTLFATHYHELTELDETLLHLKNIHVGATEENGKLIFLHKILPGPADQSYGIHVAKLAGLPRAVLREASSMLKRLEAEGAREINPSRQQLDLFSPVEVVEENPLKAEQEELLDEISQVNLNEKTPLEVMQLVADWQQALKEE.

607-614 (GPNMSGKS) contacts ATP.

Belongs to the DNA mismatch repair MutS family.

Its function is as follows. This protein is involved in the repair of mismatches in DNA. It is possible that it carries out the mismatch recognition step. This protein has a weak ATPase activity. In Lactobacillus delbrueckii subsp. bulgaricus (strain ATCC BAA-365 / Lb-18), this protein is DNA mismatch repair protein MutS.